We begin with the raw amino-acid sequence, 65 residues long: MVSVQLNDNESIDKMLKRFKKKYERAGVLKEFRKKAYFVKPSIDDRLKRSRGKRRAQRANEERNS.

The segment at 44–65 (DDRLKRSRGKRRAQRANEERNS) is disordered. Residues 48–57 (KRSRGKRRAQ) are compositionally biased toward basic residues.

Belongs to the bacterial ribosomal protein bS21 family.

This chain is Small ribosomal subunit protein bS21, found in Prosthecochloris aestuarii (strain DSM 271 / SK 413).